We begin with the raw amino-acid sequence, 457 residues long: Siroheme synthase (457 aa).

The interval Met1–Thr204 is precorrin-2 dehydrogenase /sirohydrochlorin ferrochelatase. Residues Asp22–Val23 and Leu43–Thr44 each bind NAD(+). The residue at position 128 (Ser128) is a Phosphoserine. Residues Gly216–Tyr457 form a uroporphyrinogen-III C-methyltransferase region. Pro225 contacts S-adenosyl-L-methionine. The active-site Proton acceptor is Asp248. The active-site Proton donor is Lys270. Residues Gly301–Asp303, Ile306, Thr331–Ala332, Met382, and Gly411 each bind S-adenosyl-L-methionine.

The protein in the N-terminal section; belongs to the precorrin-2 dehydrogenase / sirohydrochlorin ferrochelatase family. It in the C-terminal section; belongs to the precorrin methyltransferase family.

The enzyme catalyses uroporphyrinogen III + 2 S-adenosyl-L-methionine = precorrin-2 + 2 S-adenosyl-L-homocysteine + H(+). It carries out the reaction precorrin-2 + NAD(+) = sirohydrochlorin + NADH + 2 H(+). The catalysed reaction is siroheme + 2 H(+) = sirohydrochlorin + Fe(2+). Its pathway is cofactor biosynthesis; adenosylcobalamin biosynthesis; precorrin-2 from uroporphyrinogen III: step 1/1. It functions in the pathway cofactor biosynthesis; adenosylcobalamin biosynthesis; sirohydrochlorin from precorrin-2: step 1/1. The protein operates within porphyrin-containing compound metabolism; siroheme biosynthesis; precorrin-2 from uroporphyrinogen III: step 1/1. It participates in porphyrin-containing compound metabolism; siroheme biosynthesis; siroheme from sirohydrochlorin: step 1/1. Its pathway is porphyrin-containing compound metabolism; siroheme biosynthesis; sirohydrochlorin from precorrin-2: step 1/1. Multifunctional enzyme that catalyzes the SAM-dependent methylations of uroporphyrinogen III at position C-2 and C-7 to form precorrin-2 via precorrin-1. Then it catalyzes the NAD-dependent ring dehydrogenation of precorrin-2 to yield sirohydrochlorin. Finally, it catalyzes the ferrochelation of sirohydrochlorin to yield siroheme. This chain is Siroheme synthase, found in Salmonella gallinarum (strain 287/91 / NCTC 13346).